We begin with the raw amino-acid sequence, 101 residues long: Small ribosomal subunit protein bS18c (101 aa).

This sequence belongs to the bacterial ribosomal protein bS18 family. Part of the 30S ribosomal subunit.

It is found in the plastid. The protein resides in the chloroplast. The chain is Small ribosomal subunit protein bS18c from Panax ginseng (Korean ginseng).